Reading from the N-terminus, the 404-residue chain is Cytoplasmic 60S subunit biogenesis factor REI1 homolog 1 (404 aa).

2 consecutive C2H2-type zinc fingers follow at residues 4–28 and 68–92; these read LTCN…SDWH and YTCA…SRSH. Residues 119 to 169 are disordered; sequence QHRGSIDDDSEDEWVEVDSDEELAAEEASDSLSKLNVNESGSAEDMDDDGD. Composition is skewed to acidic residues over residues 125–147 and 160–169; these read DDDS…EEAS and SAEDMDDDGD. 2 consecutive C2H2-type zinc fingers follow at residues 178 to 201 and 229 to 256; these read TCCL…HKHH and FMCL…AKSH.

This sequence belongs to the REI1 family. Can form homodimer. Interacts with RLP24, RPL24A, RPL24B, EBP1 and JJJ1.

The protein resides in the cytoplasm. In terms of biological role, pre-60S-associated factor involved in the cytoplasmic maturation of the 60S subunit. Involved in the dissociation and recycling of other late pre-60S factors before newly synthesized large ribosomal subunits enter translation. Can complement the growth defect of a yeast mutant lacking REI1. Required for leaf growth under cold temperature conditions. This is Cytoplasmic 60S subunit biogenesis factor REI1 homolog 1 from Arabidopsis thaliana (Mouse-ear cress).